We begin with the raw amino-acid sequence, 58 residues long: uncharacterized protein (58 aa).

2 consecutive 4Fe-4S ferredoxin-type domains span residues 2 to 27 and 28 to 57; these read GIKI…IKTY and GVAI…VDTS. Residues C9, C12, C15, C19, C37, C40, C43, and C47 each coordinate [4Fe-4S] cluster.

[4Fe-4S] cluster serves as cofactor.

Ferredoxins are iron-sulfur proteins that transfer electrons probably in the CO-dehydrogenase complex. This is an uncharacterized protein from Methanocaldococcus jannaschii (strain ATCC 43067 / DSM 2661 / JAL-1 / JCM 10045 / NBRC 100440) (Methanococcus jannaschii).